A 544-amino-acid polypeptide reads, in one-letter code: CTP synthase (544 aa).

An amidoligase domain region spans residues 1–267 (MTKFVFVTGG…AQRVLEILNL (267 aa)). Ser-13 contributes to the CTP binding site. UTP is bound at residue Ser-13. 14-19 (SIGKGI) contributes to the ATP binding site. Tyr-54 provides a ligand contact to L-glutamine. Residue Asp-71 participates in ATP binding. Mg(2+) is bound by residues Asp-71 and Glu-141. CTP-binding positions include 148–150 (DIE), 188–193 (KTKPTQ), and Lys-224. UTP contacts are provided by residues 188–193 (KTKPTQ) and Lys-224. The region spanning 292 to 534 (EIAIVGKYVR…IEAALRSRPQ (243 aa)) is the Glutamine amidotransferase type-1 domain. Position 354 (Gly-354) interacts with L-glutamine. Catalysis depends on Cys-381, which acts as the Nucleophile; for glutamine hydrolysis. L-glutamine is bound by residues 382-385 (LGMQ), Glu-405, and Arg-462. Residues His-507 and Glu-509 contribute to the active site.

The protein belongs to the CTP synthase family. As to quaternary structure, homotetramer.

It catalyses the reaction UTP + L-glutamine + ATP + H2O = CTP + L-glutamate + ADP + phosphate + 2 H(+). It carries out the reaction L-glutamine + H2O = L-glutamate + NH4(+). The enzyme catalyses UTP + NH4(+) + ATP = CTP + ADP + phosphate + 2 H(+). It participates in pyrimidine metabolism; CTP biosynthesis via de novo pathway; CTP from UDP: step 2/2. Its activity is regulated as follows. Allosterically activated by GTP, when glutamine is the substrate; GTP has no effect on the reaction when ammonia is the substrate. The allosteric effector GTP functions by stabilizing the protein conformation that binds the tetrahedral intermediate(s) formed during glutamine hydrolysis. Inhibited by the product CTP, via allosteric rather than competitive inhibition. Its function is as follows. Catalyzes the ATP-dependent amination of UTP to CTP with either L-glutamine or ammonia as the source of nitrogen. Regulates intracellular CTP levels through interactions with the four ribonucleotide triphosphates. This chain is CTP synthase, found in Synechococcus sp. (strain JA-2-3B'a(2-13)) (Cyanobacteria bacterium Yellowstone B-Prime).